A 37-amino-acid chain; its full sequence is Potassium channel toxin alpha-KTx 15.1 (37 aa).

Position 1 is a pyrrolidone carboxylic acid (Gln1). Intrachain disulfides connect Cys8/Cys28, Cys13/Cys33, and Cys17/Cys35.

Belongs to the short scorpion toxin superfamily. Potassium channel inhibitor family. Alpha-KTx 15 subfamily. Expressed by the venom gland.

It is found in the secreted. In terms of biological role, blocker of voltage-gated potassium channels (600 nM of the toxin induces a block of 25% of hERG currents). May also inhibit Kv4/KCND when coexpressed with DPP6 or DPP10. In adult rat brain, it blocks the transient potassium channels in cerebellum granular cells. Blocks potassium channels by a simple 'plugging mechanism', in which a single toxin molecule finds a specific receptor site in the external vestibule of the potassium channel and thereby occludes the outer entry to the potassium conducting pore. The polypeptide is Potassium channel toxin alpha-KTx 15.1 (Androctonus australis (Sahara scorpion)).